The following is a 303-amino-acid chain: N-acetyl-D-glucosamine kinase (303 aa).

ATP is bound by residues 4-11 (GFDIGGTK) and 133-140 (GVGGGLVL). Zn(2+)-binding residues include histidine 157, cysteine 177, cysteine 179, and cysteine 184.

It belongs to the ROK (NagC/XylR) family. NagK subfamily.

The catalysed reaction is N-acetyl-D-glucosamine + ATP = N-acetyl-D-glucosamine 6-phosphate + ADP + H(+). The protein operates within cell wall biogenesis; peptidoglycan recycling. Functionally, catalyzes the phosphorylation of N-acetyl-D-glucosamine (GlcNAc) derived from cell-wall degradation, yielding GlcNAc-6-P. The polypeptide is N-acetyl-D-glucosamine kinase (Salmonella agona (strain SL483)).